The sequence spans 268 residues: Phosphatidylglycerol--prolipoprotein diacylglyceryl transferase (268 aa).

The next 7 helical transmembrane spans lie at 27–47, 66–86, 104–124, 130–150, 181–201, 208–228, and 242–262; these read PALR…MWLL, LLFY…VLFY, GGMS…YIAW, FFAV…AGRI, PSQL…LYWF, VGAV…IVET, and FMTM…YLIL. Residue arginine 149 coordinates a 1,2-diacyl-sn-glycero-3-phospho-(1'-sn-glycerol).

Belongs to the Lgt family.

Its subcellular location is the cell inner membrane. It carries out the reaction L-cysteinyl-[prolipoprotein] + a 1,2-diacyl-sn-glycero-3-phospho-(1'-sn-glycerol) = an S-1,2-diacyl-sn-glyceryl-L-cysteinyl-[prolipoprotein] + sn-glycerol 1-phosphate + H(+). It participates in protein modification; lipoprotein biosynthesis (diacylglyceryl transfer). In terms of biological role, catalyzes the transfer of the diacylglyceryl group from phosphatidylglycerol to the sulfhydryl group of the N-terminal cysteine of a prolipoprotein, the first step in the formation of mature lipoproteins. This chain is Phosphatidylglycerol--prolipoprotein diacylglyceryl transferase, found in Shewanella sp. (strain ANA-3).